We begin with the raw amino-acid sequence, 334 residues long: ABC transporter L-arabinose-binding periplasmic protein (334 aa).

A signal peptide spans 1–30 (MNRTIRRHTLRALLAALCIAPLGMQGAARA).

Belongs to the bacterial solute-binding protein 2 family. The complex is composed of two ATP-binding proteins (AraG), two transmembrane proteins (AraH) and a solute-binding protein (AraF).

It localises to the periplasm. In terms of biological role, part of the ABC transporter complex AraFGH involved in L-arabinose import. Binds with high affinity to L-arabinose. The protein is ABC transporter L-arabinose-binding periplasmic protein (araF) of Azospirillum brasilense.